The chain runs to 233 residues: Cobalt-containing nitrile hydratase subunit beta (233 aa).

The protein belongs to the nitrile hydratase subunit beta family. Heterotetramer of two alpha and two beta chains.

The enzyme catalyses an aliphatic primary amide = an aliphatic nitrile + H2O. Its function is as follows. NHase catalyzes the hydration of various nitrile compounds to the corresponding amides. This Pseudonocardia thermophila protein is Cobalt-containing nitrile hydratase subunit beta.